A 395-amino-acid polypeptide reads, in one-letter code: Tyrosine--tRNA ligase 2 (395 aa).

The short motif at 42–51 (PTAPDIHLGH) is the 'HIGH' region element. Positions 226-230 (KMSKS) match the 'KMSKS' region motif. K229 is an ATP binding site. One can recognise an S4 RNA-binding domain in the interval 334–394 (IAISNLLKEA…GKRKFARVTI (61 aa)).

This sequence belongs to the class-I aminoacyl-tRNA synthetase family. TyrS type 2 subfamily. Homodimer.

It is found in the cytoplasm. The enzyme catalyses tRNA(Tyr) + L-tyrosine + ATP = L-tyrosyl-tRNA(Tyr) + AMP + diphosphate + H(+). Functionally, catalyzes the attachment of tyrosine to tRNA(Tyr) in a two-step reaction: tyrosine is first activated by ATP to form Tyr-AMP and then transferred to the acceptor end of tRNA(Tyr). The sequence is that of Tyrosine--tRNA ligase 2 from Vibrio cholerae serotype O1 (strain ATCC 39315 / El Tor Inaba N16961).